The following is a 547-amino-acid chain: Chaperonin GroEL 1 (547 aa).

Residues 30 to 33 (TLGP), Lys51, 87 to 91 (DGTTT), Gly415, 479 to 481 (NAA), and Asp495 contribute to the ATP site.

This sequence belongs to the chaperonin (HSP60) family. As to quaternary structure, forms a cylinder of 14 subunits composed of two heptameric rings stacked back-to-back. Interacts with the co-chaperonin GroES.

The protein localises to the cytoplasm. The catalysed reaction is ATP + H2O + a folded polypeptide = ADP + phosphate + an unfolded polypeptide.. Its function is as follows. Together with its co-chaperonin GroES, plays an essential role in assisting protein folding. The GroEL-GroES system forms a nano-cage that allows encapsulation of the non-native substrate proteins and provides a physical environment optimized to promote and accelerate protein folding. The protein is Chaperonin GroEL 1 of Vibrio parahaemolyticus serotype O3:K6 (strain RIMD 2210633).